We begin with the raw amino-acid sequence, 91 residues long: Small ribosomal subunit protein uS7 (91 aa).

The protein belongs to the universal ribosomal protein uS7 family. As to quaternary structure, part of the 30S ribosomal subunit. Contacts proteins S9 and S11.

In terms of biological role, one of the primary rRNA binding proteins, it binds directly to 16S rRNA where it nucleates assembly of the head domain of the 30S subunit. Is located at the subunit interface close to the decoding center, probably blocks exit of the E-site tRNA. This Apple proliferation phytoplasma protein is Small ribosomal subunit protein uS7 (rpsG).